The following is an 86-amino-acid chain: Large ribosomal subunit protein eL20 (86 aa).

The protein belongs to the eukaryotic ribosomal protein eL20 family. In terms of assembly, part of the 50S ribosomal subunit. Binds 23S rRNA.

In Saccharolobus islandicus (strain Y.N.15.51 / Yellowstone #2) (Sulfolobus islandicus), this protein is Large ribosomal subunit protein eL20.